The following is a 156-amino-acid chain: Small ribosomal subunit protein uS7 (156 aa).

This sequence belongs to the universal ribosomal protein uS7 family. In terms of assembly, part of the 30S ribosomal subunit. Contacts proteins S9 and S11.

Its function is as follows. One of the primary rRNA binding proteins, it binds directly to 16S rRNA where it nucleates assembly of the head domain of the 30S subunit. Is located at the subunit interface close to the decoding center, probably blocks exit of the E-site tRNA. The sequence is that of Small ribosomal subunit protein uS7 from Rhodococcus opacus (strain B4).